We begin with the raw amino-acid sequence, 419 residues long: Dimethylamine methyltransferase MtbB2 (419 aa).

Residue pyrrolysine 308 is a non-standard amino acid, pyrrolysine.

It belongs to the dimethylamine methyltransferase family.

It carries out the reaction Co(I)-[dimethylamine-specific corrinoid protein] + dimethylamine + H(+) = methyl-Co(III)-[dimethylamine-specific corrinoid protein] + methylamine. It participates in one-carbon metabolism; methanogenesis from dimethylamine. Catalyzes the transfer of a methyl group from dimethylamine to the corrinoid cofactor of MtbC. No evidence for expression of this protein has been found after growth under presumably inducing conditions. The polypeptide is Dimethylamine methyltransferase MtbB2 (Methanosarcina barkeri).